The following is a 258-amino-acid chain: MKLYIIGAGPGDPDLITVKGLKLLQQADVVLYADSLVSQDLIAKSKPGAEVLKTAGMHLEEMVGTMLDRMREGKMVVRVHTGDPAMYGAIMEQMVLLKREGVDIEIVPGVTSVFAAAAAAEAELTIPDLTQTVILTRAEGRTPVPEFEKLTDLAKHKCTIALFLSATLTKKVMKEFINAGWSEDTPVVVVYKATWPDEKIVRTTVKDLDDAMRTNGIRKQAMILAGWALDPHIHDKDYRSKLYDKTFTHGFRKGVKSE.

It belongs to the precorrin methyltransferase family. Homodimer.

It catalyses the reaction Co-precorrin-4 + S-adenosyl-L-methionine = Co-precorrin-5A + S-adenosyl-L-homocysteine + H(+). It participates in cofactor biosynthesis; adenosylcobalamin biosynthesis; cob(II)yrinate a,c-diamide from sirohydrochlorin (anaerobic route): step 4/10. Functionally, catalyzes the methylation of C-11 in cobalt-precorrin-4 to form cobalt-precorrin-5A. The polypeptide is Cobalt-precorrin-4 C(11)-methyltransferase (cbiF) (Priestia megaterium (Bacillus megaterium)).